The sequence spans 417 residues: UDP-N-acetylglucosamine 1-carboxyvinyltransferase (417 aa).

22 to 23 (KN) contacts phosphoenolpyruvate. Residue R93 coordinates UDP-N-acetyl-alpha-D-glucosamine. The active-site Proton donor is C117. Residue C117 is modified to 2-(S-cysteinyl)pyruvic acid O-phosphothioketal. Residues 122–126 (RPVDQ), D304, and I326 contribute to the UDP-N-acetyl-alpha-D-glucosamine site.

It belongs to the EPSP synthase family. MurA subfamily.

It localises to the cytoplasm. The enzyme catalyses phosphoenolpyruvate + UDP-N-acetyl-alpha-D-glucosamine = UDP-N-acetyl-3-O-(1-carboxyvinyl)-alpha-D-glucosamine + phosphate. The protein operates within cell wall biogenesis; peptidoglycan biosynthesis. In terms of biological role, cell wall formation. Adds enolpyruvyl to UDP-N-acetylglucosamine. The chain is UDP-N-acetylglucosamine 1-carboxyvinyltransferase from Neisseria meningitidis serogroup C (strain 053442).